The primary structure comprises 99 residues: Plastocyanin (99 aa).

In terms of domain architecture, Plastocyanin-like spans 1–99 (AEVLLGSSDG…AGMVGKVTVN (99 aa)). Residues histidine 37, cysteine 84, histidine 87, and methionine 92 each contribute to the Cu cation site.

The protein belongs to the plastocyanin family. Cu(2+) serves as cofactor.

The protein localises to the plastid. It is found in the chloroplast thylakoid membrane. In terms of biological role, participates in electron transfer between P700 and the cytochrome b6-f complex in photosystem I. This is Plastocyanin (PETE) from Lactuca sativa (Garden lettuce).